The following is a 611-amino-acid chain: DNA-directed RNA polymerase subunit Rpo2C (611 aa).

Zn(2+) contacts are provided by Cys-547, Cys-550, Cys-565, and Cys-568.

This sequence belongs to the RNA polymerase beta chain family. Part of the RNA polymerase complex. The cofactor is Zn(2+).

It is found in the cytoplasm. The enzyme catalyses RNA(n) + a ribonucleoside 5'-triphosphate = RNA(n+1) + diphosphate. DNA-dependent RNA polymerase (RNAP) catalyzes the transcription of DNA into RNA using the four ribonucleoside triphosphates as substrates. The Rpo2 subunit (Rpo2N and Rpo2C in this organism) is implicated in DNA promoter recognition and in nucleotide binding. This chain is DNA-directed RNA polymerase subunit Rpo2C, found in Methanococcus vannielii (strain ATCC 35089 / DSM 1224 / JCM 13029 / OCM 148 / SB).